We begin with the raw amino-acid sequence, 537 residues long: Nedd4 binding protein 3 (537 aa).

S172 carries the post-translational modification Phosphoserine. 3 disordered regions span residues 173 to 234 (LDEG…VLSC), 327 to 359 (RKEL…EEEA), and 422 to 456 (LQEQ…EARE). Positions 178–207 (PEPSLSDSSSGGSFGRSPGTGPSPFSSSLG) are enriched in low complexity. Residues 295–523 (VDRLHEVAQK…LEQELRVLRE (229 aa)) adopt a coiled-coil conformation.

Belongs to the N4BP3 family. Binds NEDD4. Interacts with 14-3-3 proteins. Interacts with MAVS.

It localises to the cytoplasmic vesicle. Its subcellular location is the cell projection. The protein localises to the axon. The protein resides in the dendrite. Plays a positive role in the antiviral innate immune signaling pathway. Mechanistically, interacts with MAVS and functions as a positive regulator to promote 'Lys-63'-linked polyubiquitination of MAVS and thus strengthens the interaction between MAVS and TRAF2. Also plays a role in axon and dendrite arborization during cranial nerve development. May also be important for neural crest migration and early development of other anterior structures including eye, brain and cranial cartilage. This is Nedd4 binding protein 3 from Rattus norvegicus (Rat).